We begin with the raw amino-acid sequence, 381 residues long: Carbamoyl phosphate synthase small chain (381 aa).

Residues Met-1–Asp-192 form a CPSase region. Ser-47, Gly-244, and Gly-246 together coordinate L-glutamine. A Glutamine amidotransferase type-1 domain is found at His-196–Arg-381. Catalysis depends on Cys-272, which acts as the Nucleophile. L-glutamine-binding residues include Leu-273, Gln-276, Asn-314, Gly-316, and Phe-317. Active-site residues include His-356 and Glu-358.

The protein belongs to the CarA family. As to quaternary structure, composed of two chains; the small (or glutamine) chain promotes the hydrolysis of glutamine to ammonia, which is used by the large (or ammonia) chain to synthesize carbamoyl phosphate. Tetramer of heterodimers (alpha,beta)4.

The catalysed reaction is hydrogencarbonate + L-glutamine + 2 ATP + H2O = carbamoyl phosphate + L-glutamate + 2 ADP + phosphate + 2 H(+). It carries out the reaction L-glutamine + H2O = L-glutamate + NH4(+). It participates in amino-acid biosynthesis; L-arginine biosynthesis; carbamoyl phosphate from bicarbonate: step 1/1. It functions in the pathway pyrimidine metabolism; UMP biosynthesis via de novo pathway; (S)-dihydroorotate from bicarbonate: step 1/3. In terms of biological role, small subunit of the glutamine-dependent carbamoyl phosphate synthetase (CPSase). CPSase catalyzes the formation of carbamoyl phosphate from the ammonia moiety of glutamine, carbonate, and phosphate donated by ATP, constituting the first step of 2 biosynthetic pathways, one leading to arginine and/or urea and the other to pyrimidine nucleotides. The small subunit (glutamine amidotransferase) binds and cleaves glutamine to supply the large subunit with the substrate ammonia. The polypeptide is Carbamoyl phosphate synthase small chain (Halomonas eurihalina).